Consider the following 319-residue polypeptide: MKRIGVLTSGGDSPGMNAAIRAVVRKAIYHGVEVYGIYHGYAGLIAGNIKKLEVGDVGDIIHRGGTILYTARCPEFKTEEGQKKGIEQLKKHGIEGLVVIGGDGSYQGAKKLTEHGFPCVGVPGTIDNDIPGTDFTIGFDTALNTVIDAIDKIRDTATSHERTYVVEVMGRHAGDIALWSGLAGGAETILIPEADYDMDDIIARLKRGHERGKKHSIIIVAEGVGSGVDFGRQIQEATGFETRVTVLGHVQRGGSPTAFDRVLASRLGARAVELLLEGKGGRCVGIQNNQIVDHDIAEALAKTHTVDQRMYTLSKELSI.

Glycine 11 lines the ATP pocket. 21-25 (RAVVR) contributes to the ADP binding site. Residues 72 to 73 (RC) and 102 to 105 (GDGS) contribute to the ATP site. Aspartate 103 serves as a coordination point for Mg(2+). Position 125–127 (125–127 (TID)) interacts with substrate. Aspartate 127 serves as the catalytic Proton acceptor. Residue arginine 154 coordinates ADP. Substrate contacts are provided by residues arginine 162 and 169-171 (MGR). ADP-binding positions include 185 to 187 (GAE), arginine 211, and 213 to 215 (KKH). Substrate-binding positions include glutamate 222, arginine 243, and 249–252 (HVQR).

Belongs to the phosphofructokinase type A (PFKA) family. ATP-dependent PFK group I subfamily. Prokaryotic clade 'B1' sub-subfamily. Homotetramer. Requires Mg(2+) as cofactor.

The protein resides in the cytoplasm. It catalyses the reaction beta-D-fructose 6-phosphate + ATP = beta-D-fructose 1,6-bisphosphate + ADP + H(+). It participates in carbohydrate degradation; glycolysis; D-glyceraldehyde 3-phosphate and glycerone phosphate from D-glucose: step 3/4. With respect to regulation, allosterically activated by ADP and other diphosphonucleosides, and allosterically inhibited by phosphoenolpyruvate. Its function is as follows. Catalyzes the phosphorylation of D-fructose 6-phosphate to fructose 1,6-bisphosphate by ATP, the first committing step of glycolysis. The sequence is that of ATP-dependent 6-phosphofructokinase from Geobacillus kaustophilus (strain HTA426).